A 430-amino-acid chain; its full sequence is Pyrroloquinoline quinone-dependent sugar dehydrogenase (430 aa).

The N-terminal stretch at 1–23 (MARLAPHTLLLALFVFLFGSCTA) is a signal peptide. An N-linked (GlcNAc...) asparagine glycan is attached at asparagine 25. A pyrroloquinoline quinone-binding site is contributed by arginine 57. N-linked (GlcNAc...) asparagine glycans are attached at residues asparagine 94 and asparagine 147. Histidine 153 is a pyrroloquinoline quinone binding site. An N-linked (GlcNAc...) asparagine glycan is attached at asparagine 184. A pyrroloquinoline quinone-binding site is contributed by arginine 220. Serine 240 and aspartate 242 together coordinate Ca(2+). A disulfide bridge connects residues cysteine 281 and cysteine 316. Asparagine 306 is a glycosylation site (N-linked (GlcNAc...) asparagine). Histidine 330 is a pyrroloquinoline quinone binding site. Asparagine 341 carries an N-linked (GlcNAc...) asparagine glycan. Residue histidine 350 participates in pyrroloquinoline quinone binding. A disulfide bridge connects residues cysteine 388 and cysteine 392.

This sequence belongs to the sugar dehydrogenase AA12 family. Ca(2+) serves as cofactor. The cofactor is pyrroloquinoline quinone.

It localises to the secreted. Functionally, pyrroloquinoline quinone (PPQ)-dependent oxidoreductase that catalyzes the oxidation of various sugars such as L-fucose. In Hypocrea jecorina (strain QM6a) (Trichoderma reesei), this protein is Pyrroloquinoline quinone-dependent sugar dehydrogenase.